Here is a 182-residue protein sequence, read N- to C-terminus: UPF0149 protein PM1723 (182 aa).

It belongs to the UPF0149 family.

The sequence is that of UPF0149 protein PM1723 from Pasteurella multocida (strain Pm70).